We begin with the raw amino-acid sequence, 301 residues long: Diaminopimelate epimerase (301 aa).

Positions 15, 47, and 67 each coordinate substrate. Residue cysteine 76 is the Proton donor of the active site. Substrate-binding positions include 77–78, asparagine 163, asparagine 197, and 215–216; these read GN and ER. Residue cysteine 224 is the Proton acceptor of the active site. 225–226 contributes to the substrate binding site; sequence GS. Positions 280-301 are disordered; sequence SGSLDPSTGLWSRDGTQEAGAR.

It belongs to the diaminopimelate epimerase family. Homodimer.

The protein localises to the cytoplasm. The catalysed reaction is (2S,6S)-2,6-diaminopimelate = meso-2,6-diaminopimelate. It functions in the pathway amino-acid biosynthesis; L-lysine biosynthesis via DAP pathway; DL-2,6-diaminopimelate from LL-2,6-diaminopimelate: step 1/1. Catalyzes the stereoinversion of LL-2,6-diaminopimelate (L,L-DAP) to meso-diaminopimelate (meso-DAP), a precursor of L-lysine and an essential component of the bacterial peptidoglycan. This Rhizobium leguminosarum bv. trifolii (strain WSM2304) protein is Diaminopimelate epimerase.